The sequence spans 481 residues: Probable myosin light chain kinase DDB_G0284661 (481 aa).

The Protein kinase domain maps to 13-269 (YNITDIIGEG…VKQSLAHKWI (257 aa)). ATP is bound by residues 19–27 (IGEGTFSTV) and Lys-43. The active-site Proton acceptor is the Asp-136. Disordered stretches follow at residues 285–315 (PLITSQQQQQQSPSSLLSSSSSSTASSPSLK) and 345–427 (SNSH…DDDE). Residues 379–421 (SNNNINNNNDNNDNNNSNSNNSNNNINNFINNNNNNNNNNSNF) show a composition bias toward low complexity.

It belongs to the protein kinase superfamily. CAMK Ser/Thr protein kinase family. CaMK subfamily.

The enzyme catalyses L-seryl-[myosin light chain] + ATP = O-phospho-L-seryl-[myosin light chain] + ADP + H(+). The catalysed reaction is L-threonyl-[myosin light chain] + ATP = O-phospho-L-threonyl-[myosin light chain] + ADP + H(+). Does not have a calmodulin-binding domain. Its function is as follows. May phosphorylate a specific serine in the N-terminus of a myosin light chain. The polypeptide is Probable myosin light chain kinase DDB_G0284661 (Dictyostelium discoideum (Social amoeba)).